The primary structure comprises 361 residues: Chorismate synthase (361 aa).

Arg-47 contacts NADP(+). Residues 124–126 (RAS), Gly-286, 301–305 (KPTAT), and Arg-327 each bind FMN.

Belongs to the chorismate synthase family. Homotetramer. FMNH2 serves as cofactor.

It carries out the reaction 5-O-(1-carboxyvinyl)-3-phosphoshikimate = chorismate + phosphate. The protein operates within metabolic intermediate biosynthesis; chorismate biosynthesis; chorismate from D-erythrose 4-phosphate and phosphoenolpyruvate: step 7/7. In terms of biological role, catalyzes the anti-1,4-elimination of the C-3 phosphate and the C-6 proR hydrogen from 5-enolpyruvylshikimate-3-phosphate (EPSP) to yield chorismate, which is the branch point compound that serves as the starting substrate for the three terminal pathways of aromatic amino acid biosynthesis. This reaction introduces a second double bond into the aromatic ring system. This chain is Chorismate synthase, found in Prochlorococcus marinus (strain NATL2A).